A 478-amino-acid chain; its full sequence is Kynurenine 3-monooxygenase (478 aa).

Residues Val-19, 37-40, and Ala-57 contribute to the FAD site; that span reads YEAR. Positions 85 and 99 each coordinate L-kynurenine. FAD-binding positions include Arg-111, Leu-136, Thr-172, Asp-304, and 317–318; that span reads MN. Residues Asn-363 and Tyr-398 each contribute to the L-kynurenine site. Helical transmembrane passes span 385-404 and 425-445; these read FLHA…VAFT and GLFV…VHHL.

The protein belongs to the aromatic-ring hydroxylase family. KMO subfamily. Requires FAD as cofactor. As to expression, highest activity in liver and kidney. Low activity in spleen, stomach, intestinal tract, esophagus, heart and lung.

The protein resides in the mitochondrion outer membrane. It carries out the reaction L-kynurenine + NADPH + O2 + H(+) = 3-hydroxy-L-kynurenine + NADP(+) + H2O. It functions in the pathway cofactor biosynthesis; NAD(+) biosynthesis; quinolinate from L-kynurenine: step 1/3. Functionally, catalyzes the hydroxylation of L-kynurenine (L-Kyn) to form 3-hydroxy-L-kynurenine (L-3OHKyn). Required for synthesis of quinolinic acid, a neurotoxic NMDA receptor antagonist and potential endogenous inhibitor of NMDA receptor signaling in axonal targeting, synaptogenesis and apoptosis during brain development. Quinolinic acid may also affect NMDA receptor signaling in pancreatic beta cells, osteoblasts, myocardial cells, and the gastrointestinal tract. The polypeptide is Kynurenine 3-monooxygenase (Rattus norvegicus (Rat)).